A 148-amino-acid chain; its full sequence is Large ribosomal subunit protein bL9 (148 aa).

Belongs to the bacterial ribosomal protein bL9 family.

Its function is as follows. Binds to the 23S rRNA. This is Large ribosomal subunit protein bL9 from Pseudomonas savastanoi pv. phaseolicola (strain 1448A / Race 6) (Pseudomonas syringae pv. phaseolicola (strain 1448A / Race 6)).